The chain runs to 443 residues: Lysine-specific demethylase 8 (443 aa).

Basic and acidic residues predominate over residues 139-165 (TKLEAERGVREPGLESSKLHSPGEHSN). Positions 139–174 (TKLEAERGVREPGLESSKLHSPGEHSNKKSFASVTG) are disordered. The JmjC domain occupies 298 to 443 (GYLAQHQLFE…LSFSVSFWWS (146 aa)). Fe cation-binding residues include histidine 348, aspartate 350, and histidine 427.

It depends on Fe(2+) as a cofactor.

The protein resides in the nucleus. The enzyme catalyses N(6),N(6)-dimethyl-L-lysyl(36)-[histone H3] + 2 2-oxoglutarate + 2 O2 = L-lysyl(36)-[histone H3] + 2 formaldehyde + 2 succinate + 2 CO2. Histone demethylase required for G2/M phase cell cycle progression. Specifically demethylates dimethylated 'Lys-36' (H3K36me2) of histone H3, an epigenetic repressive mark, thereby acting as a transcription activator. May play a role in the regulation of the circadian clock. The protein is Lysine-specific demethylase 8 (kdm8) of Xenopus tropicalis (Western clawed frog).